A 134-amino-acid chain; its full sequence is Putative STAG3-like protein 2 (134 aa).

The region spanning 10–95 (PKVTCRDVLP…GRFKDWMVSM (86 aa)) is the SCD domain.

This sequence belongs to the SCC3 family.

It is found in the nucleus. The sequence is that of Putative STAG3-like protein 2 (STAG3L2) from Homo sapiens (Human).